A 563-amino-acid chain; its full sequence is Ribulokinase (563 aa).

It belongs to the ribulokinase family.

It carries out the reaction D-ribulose + ATP = D-ribulose 5-phosphate + ADP + H(+). The catalysed reaction is L-ribulose + ATP = L-ribulose 5-phosphate + ADP + H(+). It participates in carbohydrate degradation; L-arabinose degradation via L-ribulose; D-xylulose 5-phosphate from L-arabinose (bacterial route): step 2/3. The sequence is that of Ribulokinase from Halalkalibacterium halodurans (strain ATCC BAA-125 / DSM 18197 / FERM 7344 / JCM 9153 / C-125) (Bacillus halodurans).